The following is a 530-amino-acid chain: Autoinducer-2 kinase (530 aa).

This sequence belongs to the FGGY kinase family.

It is found in the cytoplasm. It catalyses the reaction (S)-4,5-dihydroxypentane-2,3-dione + ATP = (2S)-2-hydroxy-3,4-dioxopentyl phosphate + ADP + H(+). Functionally, catalyzes the phosphorylation of autoinducer-2 (AI-2) to phospho-AI-2, which subsequently inactivates the transcriptional regulator LsrR and leads to the transcription of the lsr operon. Phosphorylates the ring-open form of (S)-4,5-dihydroxypentane-2,3-dione (DPD), which is the precursor to all AI-2 signaling molecules, at the C5 position. The sequence is that of Autoinducer-2 kinase from Salmonella choleraesuis (strain SC-B67).